The chain runs to 400 residues: Acetate kinase (400 aa).

N7 contacts Mg(2+). K14 is an ATP binding site. R91 serves as a coordination point for substrate. D148 serves as the catalytic Proton donor/acceptor. Residues 208 to 212 (HLGNG), 284 to 286 (DMR), and 332 to 336 (GVGEN) each bind ATP. Position 384 (E384) interacts with Mg(2+).

Belongs to the acetokinase family. Homodimer. Mg(2+) is required as a cofactor. The cofactor is Mn(2+).

The protein localises to the cytoplasm. It carries out the reaction acetate + ATP = acetyl phosphate + ADP. Its pathway is metabolic intermediate biosynthesis; acetyl-CoA biosynthesis; acetyl-CoA from acetate: step 1/2. In terms of biological role, catalyzes the formation of acetyl phosphate from acetate and ATP. Can also catalyze the reverse reaction. This chain is Acetate kinase, found in Coprothermobacter proteolyticus (strain ATCC 35245 / DSM 5265 / OCM 4 / BT).